The primary structure comprises 3993 residues: Intermembrane lipid transfer protein VPS13B (3993 aa).

Positions 2–102 constitute a Chorein N-terminal domain; it reads LESYVTPILM…KDGIQDDHES (101 aa). The tract at residues 100 to 133 is disordered; it reads HESCGSNSTNRSTAENTKSSIKPRRIQQAAPADP. Residues 103–119 are compositionally biased toward polar residues; sequence CGSNSTNRSTAENTKSS. A phosphoserine mark is found at Ser-413, Ser-998, Ser-1001, and Ser-1032. Disordered stretches follow at residues 1262–1303, 1616–1637, and 1735–1770; these read SPVW…PFSD, DQLKPEKGSGSGGVPTESERNS, and TKATEISKQEQKKVDTFDGGTAETSSRYSGAQDSGI. Positions 1264–1291 are enriched in polar residues; it reads VWSSVGTAPPDTSTCSPSADIGTTTEGD. The span at 1739–1750 shows a compositional bias: basic and acidic residues; the sequence is EISKQEQKKVDT. Residues 1756–1770 show a composition bias toward polar residues; that stretch reads AETSSRYSGAQDSGI. Ser-1789 bears the Phosphoserine mark. The disordered stretch occupies residues 2048 to 2067; the sequence is HSSAHSKETSTPSDSILNMD. The 80-residue stretch at 2604–2683 folds into the SHR-BD domain; sequence HFVICNDTQE…TIQYKGRTAS (80 aa). The localizes the protein to the Golgi apparatus stretch occupies residues 3880–3993; sequence AFPITEISCA…KNKALRKGFS (114 aa).

This sequence belongs to the VPS13 family. Interacts with STX6. Interacts with STX12 (via N-terminus). Interacts with RAB6A isoform 1 (GTP-bound) and isoform 2 (GTP-bound). Interacts with RAB6B (GTP-bound). Ubiquitously expressed in all examined tissues.

The protein localises to the recycling endosome membrane. Its subcellular location is the cytoplasmic vesicle. It localises to the secretory vesicle. The protein resides in the acrosome membrane. It is found in the golgi apparatus. The protein localises to the cis-Golgi network membrane. Its subcellular location is the endoplasmic reticulum-Golgi intermediate compartment membrane. It localises to the trans-Golgi network membrane. The protein resides in the early endosome membrane. It is found in the lysosome membrane. In terms of biological role, mediates the transfer of lipids between membranes at organelle contact sites. Binds phosphatidylinositol 3-phosphate. Functions as a tethering factor in the slow endocytic recycling pathway, to assist traffic between early and recycling endosomes. Involved in the transport of proacrosomal vesicles to the nuclear dense lamina (NDL) during spermatid development. Plays a role in the assembly of the Golgi apparatus, possibly by mediating trafficking to the Golgi membrane. Plays a role in the development of the nervous system, and may be required for neuron projection development. May also play a role during adipose tissue development. Required for maintenance of the ocular lens. Required for proper organization of the Golgi. The sequence is that of Intermembrane lipid transfer protein VPS13B from Mus musculus (Mouse).